Reading from the N-terminus, the 256-residue chain is Small ribosomal subunit protein eS1A (256 aa).

A2 bears the N-acetylalanine; partial mark.

It belongs to the eukaryotic ribosomal protein eS1 family. As to quaternary structure, component of the small ribosomal subunit. Mature ribosomes consist of a small (40S) and a large (60S) subunit. The 40S subunit contains about 33 different proteins and 1 molecule of RNA (18S). The 60S subunit contains about 49 different proteins and 3 molecules of RNA (25S, 5.8S and 5S).

The protein resides in the cytoplasm. The sequence is that of Small ribosomal subunit protein eS1A from Debaryomyces hansenii (strain ATCC 36239 / CBS 767 / BCRC 21394 / JCM 1990 / NBRC 0083 / IGC 2968) (Yeast).